The following is a 120-amino-acid chain: UPF0102 protein Caur_2698 (120 aa).

The protein belongs to the UPF0102 family.

The protein is UPF0102 protein Caur_2698 of Chloroflexus aurantiacus (strain ATCC 29366 / DSM 635 / J-10-fl).